The chain runs to 503 residues: Cytochrome P450 3A8 (503 aa).

C442 serves as a coordination point for heme.

It belongs to the cytochrome P450 family. Heme serves as cofactor.

The protein localises to the endoplasmic reticulum membrane. It localises to the microsome membrane. It catalyses the reaction an organic molecule + reduced [NADPH--hemoprotein reductase] + O2 = an alcohol + oxidized [NADPH--hemoprotein reductase] + H2O + H(+). Catalyzes nifedipine and nilvadipine oxidations. This is Cytochrome P450 3A8 (CYP3A8) from Macaca fascicularis (Crab-eating macaque).